Reading from the N-terminus, the 447-residue chain is MREIVHLQTGQCGNQIGAKFWEVVSDEHGIATDGQYKGNTDLQLERISVYYNEVAANKYVPRAVLIDLEPGTMDSVRSGAFGSLFRPDNFVFGQSGAGNNWAKGHYTEGAELVDSVLDVVRKEAEGCDCLQGFQITHSLGGGTGAGMGTLLISKIREEFPDRMMATFSVVPSPKVSDTVVEPYNATLSVHQLVENSDETFCIDNEALYDICFRTLKLATPTYGDLNHLVSIVMSGITTCLRFPGQLNSDLRKLAVNMVPFPRLHFFMVGFAPLTARGSQQYRAITVPELTSQMFDAKNMMAASDPRHGRYLTVAAYFRGKVSMKEVEENMLSVQNKNSNYFVEWIPNNVQTAHCDIAPRAHKMSVTFIGNSTAIQDLFKRVADQFTAMFRRKAFLHWYTGEGMDEMEFTEAESNMQDLVAEYQQYQEAHMDDEEAEEAYEDEAPPEE.

Gln11, Glu69, Ser138, Gly142, Thr143, Gly144, Asn204, and Asn226 together coordinate GTP. Residue Glu69 participates in Mg(2+) binding. The segment at 427–447 is disordered; it reads EAHMDDEEAEEAYEDEAPPEE. Residues 430-447 are compositionally biased toward acidic residues; the sequence is MDDEEAEEAYEDEAPPEE.

The protein belongs to the tubulin family. As to quaternary structure, dimer of alpha and beta chains. A typical microtubule is a hollow water-filled tube with an outer diameter of 25 nm and an inner diameter of 15 nM. Alpha-beta heterodimers associate head-to-tail to form protofilaments running lengthwise along the microtubule wall with the beta-tubulin subunit facing the microtubule plus end conferring a structural polarity. Microtubules usually have 13 protofilaments but different protofilament numbers can be found in some organisms and specialized cells. It depends on Mg(2+) as a cofactor.

The protein localises to the cytoplasm. It localises to the cytoskeleton. Its function is as follows. Tubulin is the major constituent of microtubules, a cylinder consisting of laterally associated linear protofilaments composed of alpha- and beta-tubulin heterodimers. Microtubules grow by the addition of GTP-tubulin dimers to the microtubule end, where a stabilizing cap forms. Below the cap, tubulin dimers are in GDP-bound state, owing to GTPase activity of alpha-tubulin. The sequence is that of Tubulin beta chain (TBB1) from Uromyces fabae (Rust fungus).